A 452-amino-acid chain; its full sequence is Bifunctional protein GlmU (452 aa).

The segment at 1 to 226 is pyrophosphorylase; sequence MNFSAVILAA…PIEVEGVNDR (226 aa). UDP-N-acetyl-alpha-D-glucosamine-binding positions include 8–11, Lys22, Gln73, 78–79, 100–102, Gly137, Glu151, Asn166, and Asn224; these read LAAG, GT, and YGD. Mg(2+) is bound at residue Asp102. Residue Asn224 participates in Mg(2+) binding. Residues 227 to 247 form a linker region; sequence AQLARLERAYQAAQAQKLLEQ. The interval 248–452 is N-acetyltransferase; it reads GVMLRDPSRF…IANWQRPTKK (205 aa). Residues Arg330 and Lys348 each coordinate UDP-N-acetyl-alpha-D-glucosamine. His360 (proton acceptor) is an active-site residue. Tyr363 and Asn374 together coordinate UDP-N-acetyl-alpha-D-glucosamine. Acetyl-CoA contacts are provided by residues Ala377, 383–384, Ser402, Ala420, and Arg437; that span reads NY.

The protein in the N-terminal section; belongs to the N-acetylglucosamine-1-phosphate uridyltransferase family. This sequence in the C-terminal section; belongs to the transferase hexapeptide repeat family. As to quaternary structure, homotrimer. The cofactor is Mg(2+).

Its subcellular location is the cytoplasm. The enzyme catalyses alpha-D-glucosamine 1-phosphate + acetyl-CoA = N-acetyl-alpha-D-glucosamine 1-phosphate + CoA + H(+). It catalyses the reaction N-acetyl-alpha-D-glucosamine 1-phosphate + UTP + H(+) = UDP-N-acetyl-alpha-D-glucosamine + diphosphate. The protein operates within nucleotide-sugar biosynthesis; UDP-N-acetyl-alpha-D-glucosamine biosynthesis; N-acetyl-alpha-D-glucosamine 1-phosphate from alpha-D-glucosamine 6-phosphate (route II): step 2/2. It functions in the pathway nucleotide-sugar biosynthesis; UDP-N-acetyl-alpha-D-glucosamine biosynthesis; UDP-N-acetyl-alpha-D-glucosamine from N-acetyl-alpha-D-glucosamine 1-phosphate: step 1/1. It participates in bacterial outer membrane biogenesis; LPS lipid A biosynthesis. Its function is as follows. Catalyzes the last two sequential reactions in the de novo biosynthetic pathway for UDP-N-acetylglucosamine (UDP-GlcNAc). The C-terminal domain catalyzes the transfer of acetyl group from acetyl coenzyme A to glucosamine-1-phosphate (GlcN-1-P) to produce N-acetylglucosamine-1-phosphate (GlcNAc-1-P), which is converted into UDP-GlcNAc by the transfer of uridine 5-monophosphate (from uridine 5-triphosphate), a reaction catalyzed by the N-terminal domain. In Aliivibrio fischeri (strain ATCC 700601 / ES114) (Vibrio fischeri), this protein is Bifunctional protein GlmU.